Reading from the N-terminus, the 727-residue chain is AN1-type zinc finger protein 4 (727 aa).

The region spanning 28–103 is the Ubiquitin-like domain; the sequence is MELFIETLTG…LKLVLAMRGG (76 aa). 2 disordered regions span residues 187-217 and 238-264; these read HRMSGGSMYNSDTDEDEETEPSSSGQQIIEN and KKPKKAVKIKPHPPVAPRPSSGSTAPS. Positions 238–248 are enriched in basic residues; that stretch reads KKPKKAVKIKP. The AN1-type zinc-finger motif lies at 661–708; the sequence is KKTTNHCFLCGKKTGLASSYECRCGNNFCASHRYAETHGCTYDYKSAG. Zn(2+) is bound by residues cysteine 667, cysteine 670, cysteine 682, cysteine 684, cysteine 689, histidine 692, histidine 698, and cysteine 700.

The protein is AN1-type zinc finger protein 4 (ZFAND4) of Homo sapiens (Human).